The chain runs to 1085 residues: Phosphorylase b kinase regulatory subunit beta (1085 aa).

3 positions are modified to phosphoserine: Ser10, Ser19, and Ser693. 2 calmodulin-binding regions span residues 760–787 (RVYR…VVDS) and 912–943 (SGRC…ILER). Cys1082 is lipidated: S-farnesyl cysteine.

The protein belongs to the phosphorylase b kinase regulatory chain family. As to quaternary structure, hexadecamer of 4 heterotetramers, each composed of alpha, beta, gamma, and delta subunits. Alpha (PHKA1 or PHKA2) and beta (PHKB) are regulatory subunits, gamma (PHKG1 or PHKG2) is the catalytic subunit, and delta is calmodulin. Although the final Cys may be farnesylated, the terminal tripeptide is probably not removed, and the C-terminus is not methylated.

Its subcellular location is the cell membrane. The protein operates within glycan biosynthesis; glycogen metabolism. By phosphorylation of various serine residues. Its function is as follows. Phosphorylase b kinase catalyzes the phosphorylation of serine in certain substrates, including troponin I. The beta chain acts as a regulatory unit and modulates the activity of the holoenzyme in response to phosphorylation. This Mus musculus (Mouse) protein is Phosphorylase b kinase regulatory subunit beta (Phkb).